The primary structure comprises 393 residues: Messenger RNA-binding inhibitor of apoptosis 1 (393 aa).

The interval 12-76 (ELYIPQKMKA…EKILRDVWRK (65 aa)) is KH 1-like. The segment at 79–157 (VQIMIREAAL…MMIECLTEHF (79 aa)) is KH 2-like. The interval 259 to 322 (EKIKQWIPTT…NKEQCQEARN (64 aa)) is KH 3-like. Positions 328–393 (MQSHQDKPAS…LTPRKLSPSD (66 aa)) are disordered. Low complexity predominate over residues 345 to 359 (STPGSPFTSDSSSTT).

May interact with wago-4. As to expression, expressed throughout the germline and in oocytes (at protein level).

It localises to the cytoplasm. Its subcellular location is the perinuclear region. Functionally, RNA-binding protein which binds to its own mRNA and target mRNAs to negatively regulate gene expression to modulate apoptosis and differentiation in the germline. Negatively regulates the expression of the argonaute protein wago-4, and may thus play a role in RNA-mediated gene silencing (RNAi) in the germline. In Caenorhabditis elegans, this protein is Messenger RNA-binding inhibitor of apoptosis 1.